The sequence spans 464 residues: Siroheme synthase (464 aa).

Residues 1-203 are precorrin-2 dehydrogenase /sirohydrochlorin ferrochelatase; it reads MEFLPLFHNL…GQGAEAERLL (203 aa). Residues 22–23 and 43–44 each bind NAD(+); these read EI and PE. Position 128 is a phosphoserine (Ser-128). Positions 216–464 are uroporphyrinogen-III C-methyltransferase; the sequence is GEVYLVGAGP…AWFEGAQATL (249 aa). An S-adenosyl-L-methionine-binding site is contributed by Pro-225. The active-site Proton acceptor is Asp-248. The Proton donor role is filled by Lys-270. S-adenosyl-L-methionine contacts are provided by residues 301–303, Ile-306, 331–332, Met-383, and Gly-412; these read GGD and TA.

It in the N-terminal section; belongs to the precorrin-2 dehydrogenase / sirohydrochlorin ferrochelatase family. This sequence in the C-terminal section; belongs to the precorrin methyltransferase family.

It catalyses the reaction uroporphyrinogen III + 2 S-adenosyl-L-methionine = precorrin-2 + 2 S-adenosyl-L-homocysteine + H(+). The enzyme catalyses precorrin-2 + NAD(+) = sirohydrochlorin + NADH + 2 H(+). The catalysed reaction is siroheme + 2 H(+) = sirohydrochlorin + Fe(2+). The protein operates within cofactor biosynthesis; adenosylcobalamin biosynthesis; precorrin-2 from uroporphyrinogen III: step 1/1. It participates in cofactor biosynthesis; adenosylcobalamin biosynthesis; sirohydrochlorin from precorrin-2: step 1/1. It functions in the pathway porphyrin-containing compound metabolism; siroheme biosynthesis; precorrin-2 from uroporphyrinogen III: step 1/1. Its pathway is porphyrin-containing compound metabolism; siroheme biosynthesis; siroheme from sirohydrochlorin: step 1/1. The protein operates within porphyrin-containing compound metabolism; siroheme biosynthesis; sirohydrochlorin from precorrin-2: step 1/1. Multifunctional enzyme that catalyzes the SAM-dependent methylations of uroporphyrinogen III at position C-2 and C-7 to form precorrin-2 via precorrin-1. Then it catalyzes the NAD-dependent ring dehydrogenation of precorrin-2 to yield sirohydrochlorin. Finally, it catalyzes the ferrochelation of sirohydrochlorin to yield siroheme. This Pseudomonas syringae pv. tomato (strain ATCC BAA-871 / DC3000) protein is Siroheme synthase.